A 65-amino-acid chain; its full sequence is Large ribosomal subunit protein bL28 (65 aa).

The protein belongs to the bacterial ribosomal protein bL28 family.

This is Large ribosomal subunit protein bL28 from Bifidobacterium animalis subsp. lactis (strain AD011).